The primary structure comprises 322 residues: Thioredoxin reductase (322 aa).

FAD-binding positions include 12-15, 34-42, asparagine 51, and valine 84; these read SGPA and EGAVTAGGA. A disulfide bridge connects residues cysteine 136 and cysteine 139. NADP(+)-binding residues include histidine 176, arginine 182, and tyrosine 259. Residues aspartate 279 and 286–289 contribute to the FAD site; that span reads RQAI. Arginine 286 is an NADP(+) binding site.

Belongs to the class-II pyridine nucleotide-disulfide oxidoreductase family. In terms of assembly, homodimer. FAD serves as cofactor.

It catalyses the reaction [thioredoxin]-dithiol + NADP(+) = [thioredoxin]-disulfide + NADPH + H(+). Its function is as follows. Component of the thioredoxin-thioredoxin reductase system which may be involved in biosynthesis of penicillins and cephalosporins and may be important in determining the thiol-disulfide redox balance. The sequence is that of Thioredoxin reductase from Streptomyces clavuligerus.